We begin with the raw amino-acid sequence, 1693 residues long: MADLEVYKNLSPEKVERCMSVMQSGTQMIKLKRGTKGLVRLFYLDEHRTRLRWRPSRKSEKAKILIDSIYKVTEGRQSEIFHRQAEGNFDPSCCFTIYHGNHMESLDLITSNPEEARTWITGLKYLMAGISDEDSLAKRQRTHDQWVKQTFEEADKNGDGLLNIEEIHQLMHKLNVNLPRRKVRQMFQEADTDENQGTLTFEEFCVFYKMMSLRRDLYLLLLSYSDKKDHLTVEELAQFLKVEQKMNNVTTDYCLDIIKKFEVSEENKVKNVLGIEGFTNFMRSPACDIFNPLHHEVYQDMDQPLCNYYIASSHNTYLTGDQLLSQSKVDMYARVLQEGCRCVEVDCWDGPDGEPVVHHGYTLTSKILFRDVVETINKHAFVKNEFPVILSIENHCSIQQQRKIAQYLKGIFGDKLDLSSVDTGECKQLPSPQSLKGKILVKGKKLPYHLGDDAEEGEVSDEDSADEIEDECKFKLHYSNGTTEHQVESFIRKKLESLLKESQIRDKEDPDSFTVRALLKATHEGLNAHLKQSPDVKESGKKSHGRSLMTNFGKHKKTTKSRSKSYSTDDEEDTQQSTGKEGGQLYRLGRRRKTMKLCRELSDLVVYTNSVAAQDIVDDGTTGNVLSFSETRAHQVVQQKSEQFMIYNQKQLTRIYPSAYRIDSSNFNPLPYWNAGCQLVALNYQSEGRMMQLNRAKFKANGNCGYVLKPQQMCKGTFNPFSGDPLPANPKKQLILKVISGQQLPKPPDSMFGDRGEIIDPFVEVEIIGLPVDCCKDQTRVVDDNGFNPVWEETLTFTVHMPEIALVRFLVWDHDPIGRDFVGQRTVTFSSLVPGYRHVYLEGLTEASIFVHITINEIYGKWSPLILNPSYTILHFLGATKNRQLQGLKGLFNKNPRHSSSENNSHYVRKRSIGDRILRRTASAPAKGRKKSKMGFQEMVEIKDSVSEATRDQDGVLRRTTRSLQARPVSMPVDRNLLGALSLPVSETAKDIEGKENSLAEDKDGRRKGKASIKDPHFLNFNKKLSSSSSALLHKDTSQGDTIVSTAHMSVTGEQLGMSSPRGGRTTSNATSNCQENPCPSKSLSPKQHLAPDPVVNPTQDLHGVKIKEKGNPEDFVEGKSILSGSVLSHSNLEIKNLEGNRGKGRAATSFSLSDVSMLCSDIPDLHSTAILQESVISHLIDNVTLTNENEPGSSISALIGQFDETNNQALTVVSHLHNTSVMSGHCPLPSLGLKMPIKHGFCKGKSKSSFLCSSPELIALSSSETTKHATNTVYETTCTPISKTKPDDDLSSKAKTAALESNLPGSPNTSRGWLPKSPTKGEDWETLKSCSPASSPDLTLEDVIADPTLCFNSGESSLVEIDGESENLSLTTCEYRREGTSQLASPLKLKYNQGVVEHFQRGLRNGYCKETLRPSVPEIFNNIQDVKTQSISYLAYQGAGFVHNHFSDSDAKMFQTCVPQQSSAQDMHVPVPKQLAHLPLPALKLPSPCKSKSLGDLTSEDIACNFESKYQCISKSFVTTGIRDKKGVTVKTKSLEPIDALTEQLRKLVSFDQEDNCQVLYSKQDANQLPRALVRKLSSRSQSRVRNIASRAKEKQEANKQKVPNPSNGAGVVLRNKPSAPTPAVNRHSTGSYIAGYLKNTKGGGLEGRGIPEGACTALHYGHVDQFCSDNSVLQTEPSSDDKPEIYFLLRL.

The PH domain maps to 20 to 128 (SVMQSGTQMI…WITGLKYLMA (109 aa)). 3 consecutive EF-hand domains span residues 142 to 177 (THDQ…LNVN), 178 to 214 (LPRR…MSLR), and 226 to 246 (DKKD…EQKM). Residues D155, N157, D159, and E166 each coordinate Ca(2+). The PI-PLC X-box domain maps to 299–444 (QDMDQPLCNY…LKGKILVKGK (146 aa)). H314 is a catalytic residue. Residues N315, E344, and D346 each coordinate Ca(2+). Residue H358 is part of the active site. Residue E393 coordinates Ca(2+). Substrate contacts are provided by K442 and K444. A disordered region spans residues 526–585 (LNAHLKQSPDVKESGKKSHGRSLMTNFGKHKKTTKSRSKSYSTDDEEDTQQSTGKEGGQL). The segment covering 532-541 (QSPDVKESGK) has biased composition (basic and acidic residues). Basic residues predominate over residues 553-563 (GKHKKTTKSRS). A PI-PLC Y-box domain is found at 601–714 (LSDLVVYTNS…GYVLKPQQMC (114 aa)). Residues S627 and R654 each contribute to the substrate site. The 129-residue stretch at 715–843 (KGTFNPFSGD…PGYRHVYLEG (129 aa)) folds into the C2 domain. The Ca(2+) site is built by I758, D760, D784, D813, H814, and D815. Over residues 992-1005 (IEGKENSLAEDKDG) the composition is skewed to basic and acidic residues. Disordered stretches follow at residues 992–1014 (IEGK…ASIK), 1052–1089 (TGEQ…PKQH), 1300–1329 (LESN…ETLK), and 1578–1613 (LSSR…GAGV). A compositionally biased stretch (polar residues) spans 1065–1086 (RTTSNATSNCQENPCPSKSLSP). The span at 1592-1601 (RAKEKQEANK) shows a compositional bias: basic and acidic residues.

Ca(2+) serves as cofactor. In terms of tissue distribution, expressed in brain and to a lower extent in lung. In brain, it is found in cerebrum, cerebellum and spinal cord. In embryo expressed in the notochord, developing spinal cord (in a ventral to dorsal gradient), dorsal root ganglia, cerebellum and dermatomyosome.

The protein localises to the cytoplasm. It localises to the membrane. It carries out the reaction a 1,2-diacyl-sn-glycero-3-phospho-(1D-myo-inositol-4,5-bisphosphate) + H2O = 1D-myo-inositol 1,4,5-trisphosphate + a 1,2-diacyl-sn-glycerol + H(+). In terms of biological role, the production of the second messenger molecules diacylglycerol (DAG) and inositol 1,4,5-trisphosphate (IP3) is mediated by calcium-activated phosphatidylinositol-specific phospholipase C enzymes. The protein is 1-phosphatidylinositol 4,5-bisphosphate phosphodiesterase eta-1 of Homo sapiens (Human).